A 462-amino-acid chain; its full sequence is Protein Tube (462 aa).

The 126-residue stretch at 27-152 (YSRNTELRRV…SAADFVALDF (126 aa)) folds into the Death domain. Residues 218 to 265 (RDKSVPQPSGNTPPIAPPRRQQRSTTNSNFATLTGTGTTSTTIPNVPN) are disordered. Positions 249-259 (TLTGTGTTSTT) are enriched in low complexity. 2 repeat units span residues 262-269 (NVPNLTIL) and 286-293 (NIPDLSIL). Residues 262 to 460 (NVPNLTILNP…ACNIPDLSEL (199 aa)) are 5 X approximate repeats. A compositionally biased stretch (polar residues) spans 301–317 (RATVSDNPSNRTSSTDP). Positions 301-462 (RATVSDNPSN…NIPDLSELQQ (162 aa)) are disordered. The stretch at 319–326 (NIPRITLL) is repeat 3. The span at 342–354 (AKASTATTSTASS) shows a compositional bias: low complexity. Over residues 355 to 367 (NNLPMISALNISK) the composition is skewed to polar residues. The stretch at 356–363 (NLPMISAL) is repeat 4. The span at 368-377 (GSRETLRPES) shows a compositional bias: basic and acidic residues. A compositionally biased stretch (acidic residues) spans 387–403 (DDDDDNDGEEDGEEEYP). Positions 409-424 (NLSNSEQQSSNNDSSL) are enriched in low complexity. Residues 425 to 438 (TTVTGTSGDNSFEL) show a composition bias toward polar residues. Positions 439–449 (TNDSSSTSNDD) are enriched in low complexity. Repeat 5 spans residues 453–460 (NIPDLSEL).

Interacts (via Death domain) with pll (via Death domain). Post-translationally, phosphorylated by pll.

It localises to the cytoplasm. Its subcellular location is the cell membrane. Its function is as follows. Plays an essential role in the Tl receptor signaling pathway that establishes embryonic dorsoventral polarity; the signal directs import of dl into ventral and ventrolateral nuclei, thereby establishing dorsoventral polarity. Tub recruits pll to the plasma membrane and protein-protein interaction activates pll. Also has a role in pupal pattern formation. The sequence is that of Protein Tube (tub) from Drosophila melanogaster (Fruit fly).